Here is a 145-residue protein sequence, read N- to C-terminus: SsrA-binding protein (145 aa).

The protein belongs to the SmpB family.

Its subcellular location is the cytoplasm. Functionally, required for rescue of stalled ribosomes mediated by trans-translation. Binds to transfer-messenger RNA (tmRNA), required for stable association of tmRNA with ribosomes. tmRNA and SmpB together mimic tRNA shape, replacing the anticodon stem-loop with SmpB. tmRNA is encoded by the ssrA gene; the 2 termini fold to resemble tRNA(Ala) and it encodes a 'tag peptide', a short internal open reading frame. During trans-translation Ala-aminoacylated tmRNA acts like a tRNA, entering the A-site of stalled ribosomes, displacing the stalled mRNA. The ribosome then switches to translate the ORF on the tmRNA; the nascent peptide is terminated with the 'tag peptide' encoded by the tmRNA and targeted for degradation. The ribosome is freed to recommence translation, which seems to be the essential function of trans-translation. The polypeptide is SsrA-binding protein (Mesomycoplasma hyopneumoniae (strain 232) (Mycoplasma hyopneumoniae)).